The sequence spans 624 residues: DNA damage response protein Mdb1 (624 aa).

Disordered stretches follow at residues 177 to 237, 249 to 386, and 591 to 624; these read ERIP…DDES, GETK…KNKH, and IGKR…EQRT. Composition is skewed to basic and acidic residues over residues 200–217 and 225–235; these read DEKL…HSSD and EDQKQLNKTDD. The span at 250–263 shows a compositional bias: polar residues; that stretch reads ETKSPSSVSQSLSG. 2 positions are modified to phosphoserine: Ser253 and Ser283. Residues 294–305 show a composition bias toward low complexity; sequence NISDSSIKNNSI. Composition is skewed to basic and acidic residues over residues 306-316 and 325-352; these read HSDEVNPEVRP and EESK…REAE. Positions 356 to 386 are enriched in polar residues; the sequence is ISTNYSFPSSSLEDQPDKNVQSSAVENKNKH. Positions 376-468 constitute a BRCT domain; sequence QSSAVENKNK…KVLDFRSYKY (93 aa).

As to quaternary structure, homodimer. Interacts (via BRCT domain) with hta1 peptide containing the S/T-Q motif in vitro; this interaction requires phosphorylation of the hta1 peptide at the S/T-Q motif.

The protein resides in the nucleus. It localises to the chromosome. The protein localises to the cytoplasm. Its subcellular location is the cytoskeleton. It is found in the spindle. In terms of biological role, involved in DNA damage response (DDR) mediated through its interaction with phosphorylated H2A proteins hta1 and hta2 which mark the discrete foci of DNA damage. The polypeptide is DNA damage response protein Mdb1 (Schizosaccharomyces pombe (strain 972 / ATCC 24843) (Fission yeast)).